The chain runs to 212 residues: Peptide methionine sulfoxide reductase MsrA (212 aa).

Cysteine 52 is an active-site residue.

Belongs to the MsrA Met sulfoxide reductase family.

It catalyses the reaction L-methionyl-[protein] + [thioredoxin]-disulfide + H2O = L-methionyl-(S)-S-oxide-[protein] + [thioredoxin]-dithiol. The catalysed reaction is [thioredoxin]-disulfide + L-methionine + H2O = L-methionine (S)-S-oxide + [thioredoxin]-dithiol. Functionally, has an important function as a repair enzyme for proteins that have been inactivated by oxidation. Catalyzes the reversible oxidation-reduction of methionine sulfoxide in proteins to methionine. In Yersinia pseudotuberculosis serotype O:1b (strain IP 31758), this protein is Peptide methionine sulfoxide reductase MsrA.